The chain runs to 628 residues: tRNA uridine 5-carboxymethylaminomethyl modification enzyme MnmG (628 aa).

Residues 14–19 (GAGHAG), Val126, and Ser181 contribute to the FAD site. Residue 273–287 (GPRYCPSIEDKVVRF) participates in NAD(+) binding. Residue Gln370 coordinates FAD.

This sequence belongs to the MnmG family. As to quaternary structure, homodimer. Heterotetramer of two MnmE and two MnmG subunits. The cofactor is FAD.

Its subcellular location is the cytoplasm. In terms of biological role, NAD-binding protein involved in the addition of a carboxymethylaminomethyl (cmnm) group at the wobble position (U34) of certain tRNAs, forming tRNA-cmnm(5)s(2)U34. This chain is tRNA uridine 5-carboxymethylaminomethyl modification enzyme MnmG, found in Bacillus licheniformis (strain ATCC 14580 / DSM 13 / JCM 2505 / CCUG 7422 / NBRC 12200 / NCIMB 9375 / NCTC 10341 / NRRL NRS-1264 / Gibson 46).